A 102-amino-acid polypeptide reads, in one-letter code: Ferredoxin (102 aa).

2 4Fe-4S ferredoxin-type domains span residues 45-73 (VSVN…ELVE) and 74-102 (TWIE…EVMK). [4Fe-4S] cluster is bound by residues Cys-54, Cys-57, Cys-60, Cys-64, Cys-83, Cys-86, Cys-89, and Cys-93.

It depends on [4Fe-4S] cluster as a cofactor.

It participates in membrane lipid metabolism; glycerophospholipid metabolism. In terms of biological role, ferredoxin that is the specific electron donor for the geranylgeranyl reductase GGR involved in the biosynthesis of archaeal membrane lipids. This chain is Ferredoxin, found in Methanosarcina acetivorans (strain ATCC 35395 / DSM 2834 / JCM 12185 / C2A).